Reading from the N-terminus, the 179-residue chain is Ribosome maturation factor RimM (179 aa).

One can recognise a PRC barrel domain in the interval 96–175 (KDEYFWFDIE…IITVIGAMDI (80 aa)).

This sequence belongs to the RimM family. In terms of assembly, binds ribosomal protein uS19.

The protein resides in the cytoplasm. Functionally, an accessory protein needed during the final step in the assembly of 30S ribosomal subunit, possibly for assembly of the head region. Essential for efficient processing of 16S rRNA. May be needed both before and after RbfA during the maturation of 16S rRNA. It has affinity for free ribosomal 30S subunits but not for 70S ribosomes. The polypeptide is Ribosome maturation factor RimM (Sulfurimonas denitrificans (strain ATCC 33889 / DSM 1251) (Thiomicrospira denitrificans (strain ATCC 33889 / DSM 1251))).